We begin with the raw amino-acid sequence, 1220 residues long: Plasma membrane calcium-transporting ATPase 1 (1220 aa).

Glycine 2 is subject to N-acetylglycine. The Cytoplasmic segment spans residues 2 to 105 (GDMANNSVAY…KTFLQLVWEA (104 aa)). Residues serine 8 and serine 17 each carry the phosphoserine modification. A helical membrane pass occupies residues 106–126 (LQDVTLIILEIAAIVSLGLSF). The Extracellular portion of the chain corresponds to 127–154 (YQPPEGDNALCGEVSVGEEEGEGETGWI). A helical membrane pass occupies residues 155-175 (EGAAILLSVVCVVLVTAFNDW). Over 176–366 (SKEKQFRGLQ…KEKSVLQGKL (191 aa)) the chain is Cytoplasmic. The tract at residues 297–356 (EEEKKDEKKKEKKNKKQDGAIENRNKAKAQDGAAMEMQPLKSEEGGDGDEKDKKKANLPK) is disordered. 2 stretches are compositionally biased toward basic and acidic residues: residues 312–325 (KQDGAIENRNKAKA) and 337–356 (KSEEGGDGDEKDKKKANLPK). Phosphoserine is present on serine 338. A helical transmembrane segment spans residues 367 to 386 (TKLAVQIGKAGLLMSAITVI). Residues 387–418 (ILVLYFVIDTFWVQKRPWLAECTPIYIQYFVK) are Extracellular-facing. Residues 419-439 (FFIIGVTVLVVAVPEGLPLAV) traverse the membrane as a helical segment. Topologically, residues 440–855 (TISLAYSVKK…RNVYDSISKF (416 aa)) are cytoplasmic. Aspartate 475 serves as the catalytic 4-aspartylphosphate intermediate. Residues aspartate 475, threonine 477, and aspartate 797 each contribute to the Mg(2+) site. The chain crosses the membrane as a helical span at residues 856–876 (LQFQLTVNVVAVIVAFTGACI). At 877–882 (TQDSPL) the chain is on the extracellular side. The chain crosses the membrane as a helical span at residues 883 to 903 (KAVQMLWVNLIMDTLASLALA). Residues 904-927 (TEPPTESLLLRKPYGRNKPLISRT) lie on the Cytoplasmic side of the membrane. The chain crosses the membrane as a helical span at residues 928–948 (MMKNILGHAFYQLVVVFTLLF). The Extracellular portion of the chain corresponds to 949–971 (AGEKFFDIDSGRNAPLHAPPSEH). The chain crosses the membrane as a helical span at residues 972–991 (YTIVFNTFVLMQLFNEINAR). Topologically, residues 992-1005 (KIHGERNVFEGIFN) are cytoplasmic. A helical membrane pass occupies residues 1006–1027 (NAIFCTIVLGTFVVQIIIVQFG). The Extracellular segment spans residues 1028–1039 (GKPFSCSELSIE). A helical membrane pass occupies residues 1040–1060 (QWLWSIFLGMGTLLWGQLIST). Topologically, residues 1061 to 1220 (IPTSRLKFLK…SPLHSLETSL (160 aa)) are cytoplasmic. The tract at residues 1100–1117 (LRRGQILWFRGLNRIQTQ) is calmodulin-binding subdomain A. At threonine 1116 the chain carries Phosphothreonine; by PKC. The required for basolateral membrane targeting stretch occupies residues 1118–1220 (IRVVNAFRSS…SPLHSLETSL (103 aa)). 2 positions are modified to phosphoserine: serine 1140 and serine 1155. The segment at 1162 to 1220 (IDDTDAEDDAPTKRNSSPPPSPNKNNNAVDSGIHLTIEMNKSATSSSPGSPLHSLETSL) is disordered. The residue at position 1165 (threonine 1165) is a Phosphothreonine. Phosphoserine; by PKA is present on serine 1177. Phosphoserine is present on residues serine 1178 and serine 1182. Residues 1200 to 1220 (MNKSATSSSPGSPLHSLETSL) are compositionally biased toward polar residues.

It belongs to the cation transport ATPase (P-type) (TC 3.A.3) family. Type IIB subfamily. Monomer. Dimer. Oligomer. Calmodulin binding. Interacts with PDZD11. Interacts with SLC35G1 and STIM1. Interacts with YWHAE; interacts with the monomeric and dimeric forms of the YWHAE but prefer the monomer form; this interaction inhibits calcium-transporting ATPase activity. Interacts with NPTN; this interaction stabilizes ATP2B1 and increases ATPase activity; this interaction controls T cell calcium homeostasis following T cell activation. Interacts with EPB41; regulates small intestinal calcium absorption through regulation of membrane expression of ATP2B1. In terms of tissue distribution, isoform B is ubiquitously expressed. Isoforms A and E have only been found in brain cortex. Isoform C is found in brain cortex, skeletal muscle and heart muscle. Isoform D has only been found in fetal skeletal muscle. Isoform K has been found in small intestine and liver. Isoform B is expressed in hair cells of inner ear.

The protein localises to the cell membrane. Its subcellular location is the basolateral cell membrane. It localises to the synapse. It is found in the presynaptic cell membrane. The protein resides in the cytoplasmic vesicle. The protein localises to the secretory vesicle. Its subcellular location is the synaptic vesicle membrane. It catalyses the reaction Ca(2+)(in) + ATP + H2O = Ca(2+)(out) + ADP + phosphate + H(+). Functionally, catalyzes the hydrolysis of ATP coupled with the transport of calcium from the cytoplasm to the extracellular space thereby maintaining intracellular calcium homeostasis. Plays a role in blood pressure regulation through regulation of intracellular calcium concentration and nitric oxide production leading to regulation of vascular smooth muscle cells vasoconstriction. Positively regulates bone mineralization through absorption of calcium from the intestine. Plays dual roles in osteoclast differentiation and survival by regulating RANKL-induced calcium oscillations in preosteoclasts and mediating calcium extrusion in mature osteoclasts. Regulates insulin sensitivity through calcium/calmodulin signaling pathway by regulating AKT1 activation and NOS3 activation in endothelial cells. May play a role in synaptic transmission by modulating calcium and proton dynamics at the synaptic vesicles. The protein is Plasma membrane calcium-transporting ATPase 1 of Rattus norvegicus (Rat).